Reading from the N-terminus, the 585-residue chain is MGACCSCLGNRGGDGSHTQLLLAENEREAISALLQYLENRSDVDFFSNGPLRALSTLVYSENIDLQRSAALAFAEITEKDVREVNRDVLEPILILLQSADSEVQRAACGALGNLAVNTENKILIVEMGGLEPLIRQMMSTNIEVQCNAVGCITNLATQDDNKSKIAKSGALIPLTKLAKSKDIRVQRNATGALLNMTHSGENRQELVNAGAVPVLVSLLSNEDADVQYYCTTALSNIAVDEVNRKKLASTEPKLVGQLVHLMDSPSPRVQCQATLALRNLASDSGYQVEIVRAGGLPHLVQLLTCNHQPLVLAAVACIRNISIHPLNEALIIEAGFLKPLVGLLDYTDSEEIQCHAVSTLRNLAASSEKNRTALLAAGAVDKCKELVLKVPLTVQSEISACFAILALADDLKPKLYESHIIDVLIPLTFSENGEVCGNSAAALANLCSRVSNEHKQYILNNWAQPNEGIYGFLIRFLESGSPTFEHIALWTILQLLESNNTEINALIKENETILAGIKNLSASQQQIQQSQIGQTTTTTTTNITNNNTNTNTNTNTTTSTSNEDQFEDPKVELFNLTQQILQILG.

Residue glycine 2 is the site of N-myristoyl glycine attachment. Residues cysteine 4, cysteine 5, and cysteine 7 are each lipidated (S-palmitoyl cysteine). ARM repeat units lie at residues 39 to 76, 77 to 116, 118 to 157, 159 to 198, 200 to 239, 243 to 282, 284 to 323, 325 to 365, and 409 to 448; these read NRSD…FAEI, TEKD…NLAV, TENK…NLAT, DDNK…NMTH, GENR…NIAV, NRKK…NLAS, SGYQ…NISI, PLNE…NLAA, and DDLK…NLCS. The span at 531-562 shows a compositional bias: low complexity; the sequence is QIGQTTTTTTTNITNNNTNTNTNTNTTTSTSN. The disordered stretch occupies residues 531 to 565; the sequence is QIGQTTTTTTTNITNNNTNTNTNTNTTTSTSNEDQ.

Belongs to the beta-catenin family.

The protein localises to the vacuole membrane. Its function is as follows. Functions in both vacuole inheritance and protein targeting from the cytoplasm to vacuole. Vacuole inheritance has a role in the regulation of hyphal cell division. The polypeptide is Vacuolar protein 8 (VAC8) (Candida albicans (strain SC5314 / ATCC MYA-2876) (Yeast)).